The primary structure comprises 426 residues: MRSVEEQQARISAAAVAPRPIRVAIAEAQGLMCAEEVVTERPMPGFDQAAIDGYAVRSVDVAGVGDTGGVQVFADHGDLDGRDVLTLPVMGTIEAGARTLSRLQPRQAVRVQTGAPLPTLADAVLPLRWTDGGMSRVRVLRGAPSGAYVRRAGDDVQPGDVAVRAGTIIGAAQVGLLAAVGRERVLVHPRPRLSVMAVGGELVDISRTPGNGQVYDVNSYALAAAGRDACAEVNRVGIVSNDPTELGEIVEGQLNRAEVVVIAGGVGGAAAEAVRSVLSELGEMEVVRVAMHPGSVQGFGQLGRDGVPTFLLPANPVSALVVFEVMVRPLIRLSLGKRHPMRRIVSARTLSPITSVAGRKGYLRGQLMRDQDSGEYLVQALGGAPGASSHLLATLAEANCLVVVPTGAEQIRTGEIVDVAFLAQHG.

Belongs to the MoeA family. Mg(2+) is required as a cofactor.

The catalysed reaction is adenylyl-molybdopterin + molybdate = Mo-molybdopterin + AMP + H(+). It functions in the pathway cofactor biosynthesis; molybdopterin biosynthesis. Catalyzes the insertion of molybdate into adenylated molybdopterin with the concomitant release of AMP. The polypeptide is Molybdopterin molybdenumtransferase 1 (moeA1) (Mycobacterium tuberculosis (strain ATCC 25618 / H37Rv)).